A 200-amino-acid polypeptide reads, in one-letter code: LexA repressor (200 aa).

The H-T-H motif DNA-binding region spans 27 to 47 (VREICNAVELRSTSTVHGHLK). Residues Ser124 and Lys161 each act as for autocatalytic cleavage activity in the active site.

It belongs to the peptidase S24 family. In terms of assembly, homodimer.

It carries out the reaction Hydrolysis of Ala-|-Gly bond in repressor LexA.. In terms of biological role, represses a number of genes involved in the response to DNA damage (SOS response), including recA and lexA. In the presence of single-stranded DNA, RecA interacts with LexA causing an autocatalytic cleavage which disrupts the DNA-binding part of LexA, leading to derepression of the SOS regulon and eventually DNA repair. In Clostridium tetani (strain Massachusetts / E88), this protein is LexA repressor.